Consider the following 434-residue polypeptide: 3-isopropylmalate dehydratase large subunit 1 (434 aa).

[4Fe-4S] cluster is bound by residues Cys308, Cys368, and Cys371.

This sequence belongs to the aconitase/IPM isomerase family. LeuC type 2 subfamily. Heterodimer of LeuC and LeuD. [4Fe-4S] cluster serves as cofactor.

It catalyses the reaction (2R,3S)-3-isopropylmalate = (2S)-2-isopropylmalate. It participates in amino-acid biosynthesis; L-leucine biosynthesis; L-leucine from 3-methyl-2-oxobutanoate: step 2/4. In terms of biological role, catalyzes the isomerization between 2-isopropylmalate and 3-isopropylmalate, via the formation of 2-isopropylmaleate. In Deinococcus radiodurans (strain ATCC 13939 / DSM 20539 / JCM 16871 / CCUG 27074 / LMG 4051 / NBRC 15346 / NCIMB 9279 / VKM B-1422 / R1), this protein is 3-isopropylmalate dehydratase large subunit 1.